The chain runs to 272 residues: Iodotyrosine deiodinase (272 aa).

A helical transmembrane segment spans residues 5-25 (LSGVSYGLLAGILAMLIHLVY). FMN contacts are provided by residues 82–86 (RRSVR), Ser110, and 110–111 (SG). 4 residues coordinate 3-iodo-L-tyrosine: Ala112, Glu139, Tyr143, and Lys164. Residues 219–221 (TST) and Arg261 contribute to the FMN site.

It belongs to the nitroreductase family. FMN serves as cofactor.

Its subcellular location is the membrane. The catalysed reaction is 2 iodide + L-tyrosine + 2 NADP(+) = 3,5-diiodo-L-tyrosine + 2 NADPH + H(+). It catalyses the reaction iodide + L-tyrosine + NADP(+) = 3-iodo-L-tyrosine + NADPH. The enzyme catalyses 3-iodo-L-tyrosine + iodide + NADP(+) = 3,5-diiodo-L-tyrosine + NADPH + H(+). It carries out the reaction L-tyrosine + chloride + NADP(+) = 3-chloro-L-tyrosine + NADPH. The catalysed reaction is bromide + L-tyrosine + NADP(+) = 3-bromo-L-tyrosine + NADPH. In terms of biological role, catalyzes the dehalogenation of halotyrosines such as 3,5-diiodo-L-tyrosine. Likely to also catalyze the dehalogenation of other halotyrosines such as 3-bromo-L-tyrosine, 3-chloro-L-tyrosine and 3-iodo-L-tyrosine. The polypeptide is Iodotyrosine deiodinase (Hydra vulgaris (Hydra)).